Consider the following 339-residue polypeptide: tRNA methyltransferase 10 homolog A (339 aa).

Disordered stretches follow at residues 1 to 90 (MSSE…HDRK) and 282 to 339 (DKAC…SLPH). Positions 14–35 (NVDKKQGINEDQEESQKPRLGE) are enriched in basic and acidic residues. A coiled-coil region spans residues 52–81 (KQWEEQRELRKQKRKEKRKRKKLERQCQME). The segment covering 61–74 (RKQKRKEKRKRKKL) has biased composition (basic residues). The SAM-dependent MTase TRM10-type domain occupies 89–279 (RKRVRRDVVH…TILPQRKGAV (191 aa)). The segment covering 300–309 (GGSDSDSSEE) has biased composition (acidic residues). The segment covering 310–330 (EYSRNELDSPHEEKQDKENHT) has biased composition (basic and acidic residues). Ser336 is subject to Phosphoserine.

The protein belongs to the class IV-like SAM-binding methyltransferase superfamily. TRM10 family. Interacts with tRNA. In terms of tissue distribution, expressed in embryonic and fetal brain. It is expressed throughout the dorsal telencephalon at 8 and 11 weeks of gestation, with highest expression in ventricular zone and marginal zone. Detected in cerebellar cortex and nuclei, but not in dorsal telencephalon, at later stages.

Its subcellular location is the nucleus. It is found in the nucleolus. The catalysed reaction is guanosine(9) in tRNA + S-adenosyl-L-methionine = N(1)-methylguanosine(9) in tRNA + S-adenosyl-L-homocysteine + H(+). Functionally, S-adenosyl-L-methionine-dependent guanine N(1)-methyltransferase that catalyzes the formation of N(1)-methylguanine at position 9 (m1G9) in tRNAs. Probably not able to catalyze formation of N(1)-methyladenine at position 9 (m1A9) in tRNAs. This chain is tRNA methyltransferase 10 homolog A (TRMT10A), found in Homo sapiens (Human).